We begin with the raw amino-acid sequence, 426 residues long: Potassium channel subfamily K member 2 (426 aa).

The Cytoplasmic segment spans residues methionine 1–threonine 61. 2 important for GNG4 binding and L-glutamate release in astrocytes regions span residues alanine 17–serine 38 and aspartate 51–threonine 61. The chain crosses the membrane as a helical span at residues valine 62–alanine 82. N-linked (GlcNAc...) asparagine glycosylation is found at asparagine 110 and asparagine 134. Positions leucine 144–glycine 170 form an intramembrane region, pore-forming. Threonine 157, isoleucine 158, glycine 159, and phenylalanine 160 together coordinate K(+). The tract at residues threonine 157–asparagine 162 is selectivity filter 1. Residues isoleucine 172–valine 192 form a helical membrane-spanning segment. Over glycine 193 to isoleucine 223 the chain is Cytoplasmic. Residues isoleucine 224 to isoleucine 244 traverse the membrane as a helical segment. The pore-forming intramembrane region spans alanine 253–aspartate 283. K(+)-binding residues include threonine 266, isoleucine 267, glycine 268, and phenylalanine 269. Residues threonine 266–aspartate 271 form a selectivity filter 2 region. The helical transmembrane segment at valine 288–glycine 308 threads the bilayer. The Cytoplasmic segment spans residues aspartate 309–lysine 426. The interaction with AKAP5 stretch occupies residues valine 313–arginine 326. The segment at threonine 337–serine 385 is essential for chloroform and halothane sensitivity. Phosphoserine; by PKA is present on serine 348.

The protein belongs to the two pore domain potassium channel (TC 1.A.1.8) family. Homodimer; disulfide-linked. Forms heterodimers with other 2-pore domain K(+) channel subunits, such as KCNK1, KCNK4, KCNK10 and KCNK18. Interacts with AKAP5; the channel is recruited to postsynaptic microdomains by AKAP5 where it can integrate neurotransmitter receptor signals. Part of a complex composed of AKAP5 and ADRB2. Upon AKAP5 binding, the channel is no longer sensitive to intracellular acidification, membrane stretch or arachidonic acid stimuli. Interacts with POPDC1; the interaction enhances KCNK2 surface expression and is inhibited by cAMP. Interacts (via N-terminus) with G-protein subunit GNG4 (via C-terminus); this interaction confers ion selectivity to L-glutamate and Cl(-) anions. In terms of processing, phosphorylation at Ser-348 controls the reversible conversion from a leak channel to a voltage-dependent channel. As to expression, detected in kidney, adrenal gland and brain where it is preferentially expressed in the amygdala but not found in thalamus, hypothalamus, hippocampus or substantia nigra.

Its subcellular location is the cell membrane. It localises to the endoplasmic reticulum membrane. The protein resides in the cell projection. It is found in the axon. The protein localises to the dendrite. Its subcellular location is the postsynaptic density membrane. It localises to the sarcolemma. It catalyses the reaction K(+)(in) = K(+)(out). The enzyme catalyses L-glutamate(out) = L-glutamate(in). It carries out the reaction chloride(in) = chloride(out). The catalysed reaction is Rb(+)(in) = Rb(+)(out). It catalyses the reaction Cs(+)(in) = Cs(+)(out). Activated by various stimuli including intracellular acidic pH, mechanical stretch and polyunsaturated fatty acids such as arachidonic acid. Activated by volatile anesthetics such as chloroform, halothane, and isoflurane. In terms of biological role, k(+) channel that conducts voltage-dependent outward rectifying currents upon membrane depolarization. Voltage sensing is coupled to K(+) electrochemical gradient in an 'ion flux gating' mode where outward but not inward ion flow opens the gate. Converts to voltage-independent 'leak' conductance mode upon stimulation by various stimuli including mechanical membrane stretch, acidic pH, heat and lipids. Reversibly converts between a voltage-insensitive K(+) 'leak' channel and a voltage-dependent outward rectifying K(+) channel in a phosphorylation-dependent manner. Homo- and heterodimerizes to form functional channels with distinct regulatory and gating properties. In trigeminal ganglia sensory neurons, the heterodimer of KCNK2/TREK-1 and KCNK18/TRESK inhibits neuronal firing and neurogenic inflammation by stabilizing the resting membrane potential at K(+) equilibrium potential as well as by regulating the threshold of action potentials and the spike frequency. At trigeminal A-beta afferent nerves, the heterodimer of KCNK2/TREK-1 and KCNK4/TRAAK is mostly coexpressed at nodes of Ranvier where it conducts voltage-independent mechanosensitive and thermosensitive currents, allowing rapid action potential repolarization, high speed and high frequence saltatory conduction on myelinated nerves to ensure prompt sensory responses. In hippocampal astrocytes, the heterodimer of KCNK2/TREK-1 and KCNK1/TWIK-1 allows passive K(+) conductance under basal conditions, but changes ion selectivity and becomes permeable to L-glutamate and Cl(-) ions upon binding to G-protein subunit GNG4 in stimulated astrocytes. Mediates rapid L-glutamate release in response to activation of G-protein-coupled receptors, such as F2R and CNR1. In hippocampal pyramidal neurons, the homodimer of KCNK2/TREK-1 contributes to gamma-aminobutyric acid (GABA) B-induced slow inhibitory postsynaptic potential. Associates with AKAP5 and Gs-protein-coupled receptor B2AR at postsynaptic dense bodies and converts to a leak channel no longer sensitive to stimulation by arachidonic acid, acidic pH or mechanical stress, nor inhibited by Gq-coupled receptors but still under the negative control of Gs-coupled receptors. Permeable to other monovalent cations such as Rb(+) and Cs(+). Its function is as follows. Does not display channel activity but reduces the channel activity of isoform 1 and isoform 2 and reduces cell surface expression of isoform 2. This Homo sapiens (Human) protein is Potassium channel subfamily K member 2.